The following is a 137-amino-acid chain: MNIDYVKSILPHRYPFLLVDGVIEESEDRIVAFKNISISDPVFQGHFPEYPIYPGVLIVEGLAQTAGILLLKSVEGIPLFLGIDEARFKKEVRPGDRLIYEVRKLGEKLGTVQVEGVAKVDDKIVAKARLLLGVKKK.

His46 is an active-site residue.

The protein belongs to the thioester dehydratase family. FabZ subfamily.

It localises to the cytoplasm. It catalyses the reaction a (3R)-hydroxyacyl-[ACP] = a (2E)-enoyl-[ACP] + H2O. Involved in unsaturated fatty acids biosynthesis. Catalyzes the dehydration of short chain beta-hydroxyacyl-ACPs and long chain saturated and unsaturated beta-hydroxyacyl-ACPs. The polypeptide is 3-hydroxyacyl-[acyl-carrier-protein] dehydratase FabZ (Thermotoga maritima (strain ATCC 43589 / DSM 3109 / JCM 10099 / NBRC 100826 / MSB8)).